The chain runs to 37 residues: Large ribosomal subunit protein bL36 (37 aa).

This sequence belongs to the bacterial ribosomal protein bL36 family.

This is Large ribosomal subunit protein bL36 from Ureaplasma parvum serovar 3 (strain ATCC 27815 / 27 / NCTC 11736).